Here is a 553-residue protein sequence, read N- to C-terminus: Urocanate hydratase (553 aa).

NAD(+) contacts are provided by residues 45 to 46 (GG), Gln-123, 169 to 171 (GMG), Asp-189, Arg-194, 235 to 236 (NA), 256 to 260 (QTSAH), 266 to 267 (YV), Tyr-315, and Gly-485.

Belongs to the urocanase family. NAD(+) is required as a cofactor.

The protein localises to the cytoplasm. It carries out the reaction 4-imidazolone-5-propanoate = trans-urocanate + H2O. The protein operates within amino-acid degradation; L-histidine degradation into L-glutamate; N-formimidoyl-L-glutamate from L-histidine: step 2/3. Its function is as follows. Catalyzes the conversion of urocanate to 4-imidazolone-5-propionate. This chain is Urocanate hydratase, found in Staphylococcus saprophyticus subsp. saprophyticus (strain ATCC 15305 / DSM 20229 / NCIMB 8711 / NCTC 7292 / S-41).